The chain runs to 129 residues: M-zodatoxin-Lt8f (129 aa).

Positions 1–20 are cleaved as a signal peptide; the sequence is MKYFVVALALVAAFACIAES. The propeptide occupies 21 to 60; sequence KPAESEHELAEVEEENELADLEDAVWLEHLADLSDLEEAR. A Processing quadruplet motif motif is present at residues 57 to 60; the sequence is EEAR.

Cleavage of the propeptide depends on the processing quadruplet motif (XXXR, with at least one of X being E). In terms of tissue distribution, expressed by the venom gland.

Its subcellular location is the secreted. Its function is as follows. Insecticidal, cytolytic and antimicrobial peptide. Has insecticidal activity against the flesh fly S.carnaria. Has antibacterial activity against the Gram-negative bacteria E.coli. Forms voltage-dependent, ion-permeable channels in membranes. At high concentration causes cell membrane lysis. This is M-zodatoxin-Lt8f (cit 1-7) from Lachesana tarabaevi (Spider).